The sequence spans 265 residues: Mlc titration factor A (265 aa).

Residues H111, H148, H152, and E211 each contribute to the Zn(2+) site.

This sequence belongs to the MtfA family. As to quaternary structure, interacts with Mlc. It depends on Zn(2+) as a cofactor.

The protein resides in the cytoplasm. Functionally, involved in the modulation of the activity of the glucose-phosphotransferase system (glucose-PTS). Interacts with the transcriptional repressor Mlc, preventing its interaction with DNA and leading to the modulation of expression of genes regulated by Mlc, including ptsG, which encodes the PTS system glucose-specific EIICB component. In terms of biological role, shows zinc-dependent metallopeptidase activity. The sequence is that of Mlc titration factor A from Shigella sonnei (strain Ss046).